A 373-amino-acid chain; its full sequence is Glutamine synthetase (373 aa).

Residue Ala-2 is modified to N-acetylalanine. The interval 2 to 25 is required for glutamine-induced ubiquitination by CRL4(CRBN) and proteasomal degradation; it reads ATSASSHLNKGIKQVYMALPQGDK. Residues Lys-11 and Lys-14 each carry the N6-acetyllysine modification. The 81-residue stretch at 26-106 folds into the GS beta-grasp domain; sequence VQAMYIWIDG…VFCEVFKYNR (81 aa). Tyr-104 bears the Phosphotyrosine mark. Positions 113–373 constitute a GS catalytic domain; the sequence is LRHTCKRIMD…TGDEPFQYKN (261 aa). Glu-134 contacts ATP. Residues Glu-134, Glu-136, Glu-196, and Glu-203 each coordinate Mn(2+). Residue 203–208 coordinates ATP; that stretch reads EFQIGP. 246 to 247 lines the L-glutamate pocket; the sequence is NW. Mn(2+) is bound at residue His-253. Residues 255–257, Arg-319, and Arg-324 each bind ATP; that span reads NFS. Arg-319 is a binding site for L-glutamate. 336–338 is a binding site for ADP; sequence YFE. Glu-338 lines the Mn(2+) pocket. Arg-340 serves as a coordination point for L-glutamate. Ser-343 bears the Phosphoserine mark.

This sequence belongs to the glutamine synthetase family. Decamer; composed of two pentamers. Interacts with PALMD. Interacts with RHOJ. Interacts with BEST2; this interaction tethers a fraction of GLUL to the membrane, causing a decrease of cytosolic glutamine synthase (GS) activity and inhibits the chloride channel activity of BEST2 by affecting the gating at the aperture in the absence of intracellular glutamate. Mg(2+) serves as cofactor. Mn(2+) is required as a cofactor. In terms of processing, palmitoylated; undergoes autopalmitoylation. Post-translationally, acetylated by EP300/p300; acetylation is stimulated by increased glutamine levels and promotes ubiquitin-mediated proteasomal degradation. Ubiquitinated by ZNRF1. Ubiquitinated by the DCX (DDB1-CUL4-X-box) E3 ubiquitin-protein ligase complex called CRL4(CRBN), leading to proteasomal degradation.

The protein localises to the cytoplasm. It localises to the cytosol. Its subcellular location is the microsome. It is found in the mitochondrion. The protein resides in the cell membrane. It catalyses the reaction L-glutamate + NH4(+) + ATP = L-glutamine + ADP + phosphate + H(+). The catalysed reaction is L-cysteinyl-[protein] + hexadecanoyl-CoA = S-hexadecanoyl-L-cysteinyl-[protein] + CoA. Glutamine synthetase activity is inhibited by methionine sulfoximine (MSO). Glutamine synthetase that catalyzes the ATP-dependent conversion of glutamate and ammonia to glutamine. Its role depends on tissue localization: in the brain, it regulates the levels of toxic ammonia and converts neurotoxic glutamate to harmless glutamine, whereas in the liver, it is one of the enzymes responsible for the removal of ammonia. Plays a key role in ammonium detoxification during erythropoiesis: the glutamine synthetase activity is required to remove ammonium generated by porphobilinogen deaminase (HMBS) during heme biosynthesis to prevent ammonium accumulation and oxidative stress. Essential for proliferation of fetal skin fibroblasts. Independently of its glutamine synthetase activity, required for endothelial cell migration during vascular development. Involved in angiogenesis by regulating membrane localization and activation of the GTPase RHOJ, possibly by promoting RHOJ palmitoylation. May act as a palmitoyltransferase for RHOJ: able to autopalmitoylate and then transfer the palmitoyl group to RHOJ. Plays a role in ribosomal 40S subunit biogenesis. Through the interaction with BEST2, inhibits BEST2 channel activity by affecting the gating at the aperture in the absence of intracellular L-glutamate, but sensitizes BEST2 to intracellular L-glutamate, which promotes the opening of BEST2 and thus relieves its inhibitory effect on BEST2. In Bos taurus (Bovine), this protein is Glutamine synthetase.